We begin with the raw amino-acid sequence, 634 residues long: Sodium-dependent neutral amino acid transporter B(0)AT1 (634 aa).

The Cytoplasmic portion of the chain corresponds to 1 to 41 (MVRLVLPNPGLEERIPSLDELEVIEKEEAGSRPKWDNKAQY). A Phosphoserine modification is found at S17. Residues 42-62 (MLTCVGFCVGLGNVWRFPYLC) traverse the membrane as a helical segment. Residues 63–67 (QSHGG) lie on the Extracellular side of the membrane. A helical membrane pass occupies residues 68 to 88 (GAFMIPFLILLVFEGIPLLYL). Residues 89 to 119 (EFAIGQRLRKGSMGVWSSIHPALKGIGIASM) lie on the Cytoplasmic side of the membrane. Residues 120 to 140 (FVSFMVGLYYNTIIAWVMWYF) form a helical membrane-spanning segment. Over 141–192 (FNSFQEPLPWSECPLNQNQTGYVEECAKSSSVDYFWYRETLNISTSISDSGS) the chain is Extracellular. N-linked (GlcNAc...) asparagine glycans are attached at residues N158 and N182. Residues 193 to 213 (IQWWILLCLTCAWSVLYVCII) traverse the membrane as a helical segment. The Cytoplasmic segment spans residues 214-221 (RGIETTGK). Residues 222 to 242 (AVYITSTLPYVVLTIFLIRGL) form a helical membrane-spanning segment. The Extracellular portion of the chain corresponds to 243–268 (TLKGATNGIVFLFTPNITELSNPNTW). N258 carries N-linked (GlcNAc...) asparagine glycosylation. Residues 269–289 (LDAGAQVFYSFSLAFGGLISF) traverse the membrane as a helical segment. Residues 290-304 (SSYNSVHNNCEMDSV) lie on the Cytoplasmic side of the membrane. Residues 305 to 325 (IVSVINGFTSVYAATVVYSII) form a helical membrane-spanning segment. Residues 326-413 (GFRATERFDD…TEAITKMPVS (88 aa)) are Extracellular-facing. N354 and N368 each carry an N-linked (GlcNAc...) asparagine glycan. The chain crosses the membrane as a helical span at residues 414-434 (PLWSVLFFIMLFCLGLSSMFG). Topologically, residues 435 to 456 (NMEGVVVPLQDLNITPKKWPKE) are cytoplasmic. A helical membrane pass occupies residues 457–477 (LLTGLICLGTYLIAFIFTLNS). The Extracellular portion of the chain corresponds to 478–487 (GQYWLSLLDS). Residues 488–508 (FAGSIPLLIIAFCEMFAVVYV) traverse the membrane as a helical segment. Residues 509-531 (YGVDRFNKDIEFMIGHKPNIFWQ) are Cytoplasmic-facing. The helical transmembrane segment at 532–552 (VTWRVVSPLIMLVIFLFFFVI) threads the bilayer. Over 553–581 (EVNKTLMYSIWDPNYEEFPKSQKIPYPNW) the chain is Extracellular. An N-linked (GlcNAc...) asparagine glycan is attached at N555. A helical membrane pass occupies residues 582–602 (VYAVVVTVAGVPCLSIPCFAI). Topologically, residues 603–634 (YKFIRNCCQKSDDHHGLVNTLSTASVNGDLKN) are cytoplasmic. Phosphoserine is present on S627.

This sequence belongs to the sodium:neurotransmitter symporter (SNF) (TC 2.A.22) family. SLC6A19 subfamily. As to quaternary structure, interacts in a tissue-specific manner with ACE2 in small intestine and with CLTRN in the kidney. Interacts with CLTRN; this interaction is required for trafficking of SLC6A19 to the plasma membrane and for its catalytic activation in kidneys. Interacts with ACE2; this interaction is required for trafficking of SLC6A19 to the plasma membrane and for its catalytic activation in intestine. Interacts with ANPEP; the interaction positively regulates its amino acid transporter activity. In terms of tissue distribution, predominantly expressed in kidney and small intestine (at protein level). Expressed in the intestinal brush border (at protein level). Expression not observed in other organs, such as lung, skeletal muscle, brain, liver and pancreas. In kidney, expression is localized in the renal cortex but not in the medulla. Substantial amounts of expression in the proximal tubules. The distal nephron segments and the glomeruli are consistently negative. In the small intestine, expression is exclusively localized in villus enterocytes. High resolution of the hybridization-positive villi reveals a gradient of expression with the highest levels in apical cells. Not detected in crypt cells or in any other cell types of the small intestine.

The protein resides in the cell membrane. The enzyme catalyses L-alanine(in) + Na(+)(in) = L-alanine(out) + Na(+)(out). It carries out the reaction L-cysteine(in) + Na(+)(in) = L-cysteine(out) + Na(+)(out). The catalysed reaction is L-glutamine(in) + Na(+)(in) = L-glutamine(out) + Na(+)(out). It catalyses the reaction glycine(in) + Na(+)(in) = glycine(out) + Na(+)(out). The enzyme catalyses L-isoleucine(in) + Na(+)(in) = L-isoleucine(out) + Na(+)(out). It carries out the reaction L-leucine(in) + Na(+)(in) = L-leucine(out) + Na(+)(out). The catalysed reaction is L-methionine(in) + Na(+)(in) = L-methionine(out) + Na(+)(out). It catalyses the reaction L-phenylalanine(in) + Na(+)(in) = L-phenylalanine(out) + Na(+)(out). The enzyme catalyses L-serine(in) + Na(+)(in) = L-serine(out) + Na(+)(out). It carries out the reaction L-tryptophan(in) + Na(+)(in) = L-tryptophan(out) + Na(+)(out). The catalysed reaction is L-tyrosine(in) + Na(+)(in) = L-tyrosine(out) + Na(+)(out). It catalyses the reaction L-valine(in) + Na(+)(in) = L-valine(out) + Na(+)(out). Transporter that mediates resorption of neutral amino acids across the apical membrane of renal and intestinal epithelial cells. This uptake is sodium-dependent and chloride-independent. Requires CLTRN in kidney or ACE2 in intestine for cell surface expression and amino acid transporter activity. In Mus musculus (Mouse), this protein is Sodium-dependent neutral amino acid transporter B(0)AT1 (Slc6a19).